Reading from the N-terminus, the 264-residue chain is Thymidylate synthase (264 aa).

Arginine 21 is a dUMP binding site. (6R)-5,10-methylene-5,6,7,8-tetrahydrofolate is bound at residue histidine 51. 126–127 (RR) contacts dUMP. Cysteine 146 functions as the Nucleophile in the catalytic mechanism. DUMP-binding positions include 166 to 169 (RSAD), asparagine 177, and 207 to 209 (HLY). Residue aspartate 169 participates in (6R)-5,10-methylene-5,6,7,8-tetrahydrofolate binding. Residue alanine 263 participates in (6R)-5,10-methylene-5,6,7,8-tetrahydrofolate binding.

Belongs to the thymidylate synthase family. Bacterial-type ThyA subfamily. Homodimer.

Its subcellular location is the cytoplasm. The enzyme catalyses dUMP + (6R)-5,10-methylene-5,6,7,8-tetrahydrofolate = 7,8-dihydrofolate + dTMP. Its pathway is pyrimidine metabolism; dTTP biosynthesis. In terms of biological role, catalyzes the reductive methylation of 2'-deoxyuridine-5'-monophosphate (dUMP) to 2'-deoxythymidine-5'-monophosphate (dTMP) while utilizing 5,10-methylenetetrahydrofolate (mTHF) as the methyl donor and reductant in the reaction, yielding dihydrofolate (DHF) as a by-product. This enzymatic reaction provides an intracellular de novo source of dTMP, an essential precursor for DNA biosynthesis. In Legionella pneumophila (strain Paris), this protein is Thymidylate synthase.